The sequence spans 588 residues: UvrABC system protein C (588 aa).

Residues 12 to 89 (SKPGCYLYLN…IKKYRPKYNV (78 aa)) form the GIY-YIG domain. The UVR domain maps to 194–229 (NEVKTLLTNQMHKAAENLQFEEAQRIKEQIISLDFT).

The protein belongs to the UvrC family. As to quaternary structure, interacts with UvrB in an incision complex.

It is found in the cytoplasm. Its function is as follows. The UvrABC repair system catalyzes the recognition and processing of DNA lesions. UvrC both incises the 5' and 3' sides of the lesion. The N-terminal half is responsible for the 3' incision and the C-terminal half is responsible for the 5' incision. This chain is UvrABC system protein C, found in Mesoplasma florum (strain ATCC 33453 / NBRC 100688 / NCTC 11704 / L1) (Acholeplasma florum).